The sequence spans 279 residues: Inhibitor of growth protein 1 (279 aa).

The disordered stretch occupies residues 115 to 206 (AHQDISDGTG…EASPADLPID (92 aa)). Lysine 135 is covalently cross-linked (Glycyl lysine isopeptide (Lys-Gly) (interchain with G-Cter in SUMO2)). The span at 154–171 (RNNENRENASNNHDHDDI) shows a compositional bias: basic and acidic residues. Positions 179-191 (KKAKTSKKKKRSK) are enriched in basic residues. The segment at 210–259 (PTYCLCNQVSYGEMIGCDNDECPIEWFHFSCVGLNHKPKGKWYCPKCRGE) adopts a PHD-type zinc-finger fold. Positions 213, 215, 226, 231, 237, 240, 253, and 256 each coordinate Zn(2+). Positions 262–279 (KTMDKALEKSKKERAYNR) are PBR.

Belongs to the ING family. As to quaternary structure, interacts with H3K4me3 and to a lesser extent with H3K4me2. Isoform 2 interacts with RSL1D1. As to expression, in the adult, widely expressed with highest levels in thymus and testis.

It is found in the nucleus. Isoform 1 inhibits p53-dependent transcriptional activation and may function as an oncoprotein. Isoform 2 acts as a negative growth regulator by cooperating with p53 in transcriptional activation of p53-responsive genes and may act as a tumor suppressor. The polypeptide is Inhibitor of growth protein 1 (Ing1) (Mus musculus (Mouse)).